The primary structure comprises 226 residues: Orotate phosphoribosyltransferase 1 (226 aa).

Lys30 is a 5-phospho-alpha-D-ribose 1-diphosphate binding site. 38-39 (FF) serves as a coordination point for orotate. 5-phospho-alpha-D-ribose 1-diphosphate is bound by residues 76–77 (YK), Arg106, Lys107, Lys110, His112, and 132–140 (DDVMTAGTA). 2 residues coordinate orotate: Thr136 and Arg164. Residues Ser213 and Ser225 each carry the phosphoserine modification.

The protein belongs to the purine/pyrimidine phosphoribosyltransferase family. PyrE subfamily. As to quaternary structure, homodimer.

It catalyses the reaction orotidine 5'-phosphate + diphosphate = orotate + 5-phospho-alpha-D-ribose 1-diphosphate. It participates in pyrimidine metabolism; UMP biosynthesis via de novo pathway; UMP from orotate: step 1/2. In terms of biological role, catalyzes the transfer of a ribosyl phosphate group from 5-phosphoribose 1-diphosphate to orotate, leading to the formation of orotidine monophosphate (OMP). This is Orotate phosphoribosyltransferase 1 (URA5) from Saccharomyces cerevisiae (strain ATCC 204508 / S288c) (Baker's yeast).